The sequence spans 1007 residues: A disintegrin and metalloproteinase with thrombospondin motifs 1 (1007 aa).

Residues 1–20 (MPCCLWAALSLLLAVVGAGA) form the signal peptide. N-linked (GlcNAc...) asparagine glycosylation is found at N130 and N228. The Peptidase M12B domain occupies 184–370 (LWLELAIVAD…WSSCSKEQFH (187 aa)). H322 lines the Zn(2+) pocket. The Metal-binding signature appears at 322-333 (HELAHLLGLTHD). Residue E323 is part of the active site. Positions 326 and 332 each coordinate Zn(2+). Cystine bridges form between C338–C364, C494–C530, C498–C536, and C509–C520. One can recognise a TSP type-1 1 domain in the interval 482 to 537 (TPEWGDWEEWSACNADCGYGLRTRTRKCKYRGFVSESACEGAGSQVATCWAGSSCA). 6 N-linked (GlcNAc...) asparagine glycosylation sites follow: N561, N610, N626, N737, N777, and N865. 2 consecutive TSP type-1 domains span residues 833–899 (CEFV…NRIP) and 900–952 (CPVY…RRCP). Intrachain disulfides connect C912-C946, C916-C951, and C927-C935.

Zn(2+) serves as cofactor.

Its subcellular location is the secreted. The protein localises to the extracellular space. It localises to the extracellular matrix. Functionally, involved in larval molting and metamorphosis. May degrade extracellular matrix (ECM) and basement membrane (BM) during the development of organs to allow degeneration and remodeling of tissues. The chain is A disintegrin and metalloproteinase with thrombospondin motifs 1 from Bombyx mori (Silk moth).